The sequence spans 353 residues: Putative glycosyltransferase TagX (353 aa).

This sequence belongs to the glycosyltransferase 2 family.

The chain is Putative glycosyltransferase TagX (tagX) from Staphylococcus aureus (strain COL).